A 1534-amino-acid polypeptide reads, in one-letter code: Alpha-2-macroglobulin homolog (1534 aa).

Residues 1–38 form the signal peptide; the sequence is MDTQRFQSQFHWHLSFKFSGAIAACLSLSLVGTGLANA.

It belongs to the protease inhibitor I39 (alpha-2-macroglobulin) family. Bacterial alpha-2-macroglobulin subfamily.

The sequence is that of Alpha-2-macroglobulin homolog (yfaS) from Escherichia coli O157:H7.